The sequence spans 252 residues: Hydroxyacylglutathione hydrolase (252 aa).

The Zn(2+) site is built by His54, His56, Asp58, His59, His111, Asp128, and His166.

The protein belongs to the metallo-beta-lactamase superfamily. Glyoxalase II family. As to quaternary structure, monomer. Requires Zn(2+) as cofactor.

It catalyses the reaction an S-(2-hydroxyacyl)glutathione + H2O = a 2-hydroxy carboxylate + glutathione + H(+). The protein operates within secondary metabolite metabolism; methylglyoxal degradation; (R)-lactate from methylglyoxal: step 2/2. Functionally, thiolesterase that catalyzes the hydrolysis of S-D-lactoyl-glutathione to form glutathione and D-lactic acid. The protein is Hydroxyacylglutathione hydrolase of Photobacterium profundum (strain SS9).